Reading from the N-terminus, the 101-residue chain is Ubiquitin-related modifier 1 (101 aa).

G101 carries the 1-thioglycine modification. Residue G101 forms a Glycyl lysine isopeptide (Gly-Lys) (interchain with K-? in acceptor proteins) linkage.

Belongs to the URM1 family. Post-translationally, C-terminal thiocarboxylation occurs in 2 steps, it is first acyl-adenylated (-COAMP) via the hesA/moeB/thiF part of UBA4, then thiocarboxylated (-COSH) via the rhodanese domain of UBA4.

Its subcellular location is the cytoplasm. It participates in tRNA modification; 5-methoxycarbonylmethyl-2-thiouridine-tRNA biosynthesis. Its function is as follows. Acts as a sulfur carrier required for 2-thiolation of mcm(5)S(2)U at tRNA wobble positions of cytosolic tRNA(Lys), tRNA(Glu) and tRNA(Gln). Serves as sulfur donor in tRNA 2-thiolation reaction by being thiocarboxylated (-COSH) at its C-terminus by the MOCS3 homolog UBA4. The sulfur is then transferred to tRNA to form 2-thiolation of mcm(5)S(2)U. Prior mcm(5) tRNA modification by the elongator complex is required for 2-thiolation. Also acts as a ubiquitin-like protein (UBL) that is covalently conjugated via an isopeptide bond to lysine residues of target proteins such as AHP1. The thiocarboxylated form serves as substrate for conjugation and oxidative stress specifically induces the formation of UBL-protein conjugates. The protein is Ubiquitin-related modifier 1 of Kluyveromyces lactis (strain ATCC 8585 / CBS 2359 / DSM 70799 / NBRC 1267 / NRRL Y-1140 / WM37) (Yeast).